Here is a 186-residue protein sequence, read N- to C-terminus: Peptidyl-tRNA hydrolase (186 aa).

TRNA is bound at residue Y14. Catalysis depends on H19, which acts as the Proton acceptor. Residues F64, N66, and N112 each contribute to the tRNA site.

The protein belongs to the PTH family. In terms of assembly, monomer.

Its subcellular location is the cytoplasm. The catalysed reaction is an N-acyl-L-alpha-aminoacyl-tRNA + H2O = an N-acyl-L-amino acid + a tRNA + H(+). Functionally, hydrolyzes ribosome-free peptidyl-tRNAs (with 1 or more amino acids incorporated), which drop off the ribosome during protein synthesis, or as a result of ribosome stalling. Catalyzes the release of premature peptidyl moieties from peptidyl-tRNA molecules trapped in stalled 50S ribosomal subunits, and thus maintains levels of free tRNAs and 50S ribosomes. This chain is Peptidyl-tRNA hydrolase, found in Listeria monocytogenes serovar 1/2a (strain ATCC BAA-679 / EGD-e).